A 188-amino-acid polypeptide reads, in one-letter code: ADP-ribosylation factor J (188 aa).

GTP contacts are provided by residues 34-40 (DGAGKST), 75-79 (DVGGQ), and 134-137 (NKQD).

The protein belongs to the small GTPase superfamily. Arf family.

Its subcellular location is the golgi apparatus. In terms of biological role, GTP-binding protein that may be involved in protein trafficking. May modulate vesicle budding and uncoating within the Golgi apparatus. The chain is ADP-ribosylation factor J (arrJ) from Dictyostelium discoideum (Social amoeba).